Consider the following 204-residue polypeptide: 3-dehydroquinate dehydratase (204 aa).

3-dehydroquinate is bound by residues serine 9, 30–32 (ELR), and arginine 57. Residue histidine 108 is the Proton donor/acceptor of the active site. Residue lysine 133 is the Schiff-base intermediate with substrate of the active site. 3-dehydroquinate contacts are provided by arginine 167, threonine 186, and glutamine 190.

The protein belongs to the type-I 3-dehydroquinase family. Homodimer.

The enzyme catalyses 3-dehydroquinate = 3-dehydroshikimate + H2O. The protein operates within metabolic intermediate biosynthesis; chorismate biosynthesis; chorismate from D-erythrose 4-phosphate and phosphoenolpyruvate: step 3/7. Involved in the third step of the chorismate pathway, which leads to the biosynthesis of aromatic amino acids. Catalyzes the cis-dehydration of 3-dehydroquinate (DHQ) and introduces the first double bond of the aromatic ring to yield 3-dehydroshikimate. The chain is 3-dehydroquinate dehydratase from Metallosphaera sedula (strain ATCC 51363 / DSM 5348 / JCM 9185 / NBRC 15509 / TH2).